Here is a 173-residue protein sequence, read N- to C-terminus: Disulfide bond formation protein B (173 aa).

Residues 1–14 are Cytoplasmic-facing; the sequence is MIEFLRRIAAHRLA. A helical membrane pass occupies residues 15 to 31; that stretch reads WGLLAASALFLELSALF. Residues 32–49 are Periplasmic-facing; it reads FQYVLGLHPCVMCVYERL. The cysteines at positions 41 and 44 are disulfide-linked. The chain crosses the membrane as a helical span at residues 50 to 65; sequence AILGVLSAGLLGMVAP. At 66–72 the chain is on the cytoplasmic side; sequence EKWYLRW. The helical transmembrane segment at 73–90 threads the bilayer; it reads SALLLWGYSAFRGLQLAL. The Periplasmic portion of the chain corresponds to 91–145; it reads KHVDYQMNPSPFNVCSPFADFPSWAPLDQWLPWLFFPDGDCSEISWQFLSFSMPQ. An intrachain disulfide couples Cys105 to Cys131. A helical membrane pass occupies residues 146–164; the sequence is WLVAIFAAYLLVFVVVTIG. The Cytoplasmic segment spans residues 165-173; sequence NLVKGRCCS.

It belongs to the DsbB family.

The protein resides in the cell inner membrane. Functionally, required for disulfide bond formation in some periplasmic proteins. Acts by oxidizing the DsbA protein. In Aeromonas salmonicida (strain A449), this protein is Disulfide bond formation protein B.